The sequence spans 197 residues: Large ribosomal subunit protein uL10 (197 aa).

Positions 162–197 (GGASAPAAEEAPAAEEAAAEEVAAPAEAAEAATEEN) are disordered. Residues 163-197 (GASAPAAEEAPAAEEAAAEEVAAPAEAAEAATEEN) show a composition bias toward low complexity.

This sequence belongs to the universal ribosomal protein uL10 family. In terms of assembly, part of the ribosomal stalk of the 50S ribosomal subunit. The N-terminus interacts with L11 and the large rRNA to form the base of the stalk. The C-terminus forms an elongated spine to which L12 dimers bind in a sequential fashion forming a multimeric L10(L12)X complex.

Functionally, forms part of the ribosomal stalk, playing a central role in the interaction of the ribosome with GTP-bound translation factors. In Paenarthrobacter aurescens (strain TC1), this protein is Large ribosomal subunit protein uL10.